The following is a 140-amino-acid chain: Relaxin-3 (140 aa).

Residues 1-26 (MAKRPLLLLLLAVWVLAGELWLRTEA) form the signal peptide. Disulfide bonds link cysteine 36/cysteine 127, cysteine 48/cysteine 140, and cysteine 126/cysteine 131. A propeptide spans 56–116 (SDMLAHEALG…RTPGALRGSR (61 aa)) (connecting peptide).

Belongs to the insulin family. Heterodimer of a B chain and an A chain linked by two disulfide bonds.

The protein localises to the secreted. In terms of biological role, may play a role in neuropeptide signaling processes. Ligand for LGR7, RXFP3 and RXFP4. The protein is Relaxin-3 (RLN3) of Sus scrofa (Pig).